Here is a 203-residue protein sequence, read N- to C-terminus: MSAIERITKAAHLIDMNDIIREGNPTLRAIAEEVTFPLSDQEIILGEKMMQFLKHSQDPVMAEKMGLRGGVGLAAPQLDISKRIIAVLVPNIVEEGETPQEAYDLEAIMYNPKIVSHSVQDAALGEGEGCLSVDRNVPGYVVRHARVTVDYFDKDGEKHRIKLKGYNSIVVQHEIDHINGIMFYDRINEKDPFAVKDGLLILE.

Residues C130 and H173 each coordinate Fe cation. E174 is a catalytic residue. Residue H177 participates in Fe cation binding.

Belongs to the polypeptide deformylase family. Fe(2+) serves as cofactor.

It carries out the reaction N-terminal N-formyl-L-methionyl-[peptide] + H2O = N-terminal L-methionyl-[peptide] + formate. In terms of biological role, removes the formyl group from the N-terminal Met of newly synthesized proteins. Requires at least a dipeptide for an efficient rate of reaction. N-terminal L-methionine is a prerequisite for activity but the enzyme has broad specificity at other positions. The sequence is that of Peptide deformylase from Streptococcus pneumoniae serotype 4 (strain ATCC BAA-334 / TIGR4).